Reading from the N-terminus, the 124-residue chain is Glutaredoxin-2 (124 aa).

C13 and C16 are joined by a disulfide.

The protein belongs to the glutaredoxin family. As to quaternary structure, homodimer.

The protein resides in the host cytoplasm. Functionally, glutaredoxin necessary for virion morphogenesis and virus replication. Functions as a thiol-disulfide transfer protein between membrane-associated OPG128 and substrates OPG095 or OPG053. The complete pathway for formation of disulfide bonds in intracellular virion membrane proteins sequentially involves oxidation of OPG072, OPG128 and OPG088. Exhibit thioltransferase and dehydroascorbate reductase activities in vitro. The protein is Glutaredoxin-2 (OPG088) of Camelus.